Reading from the N-terminus, the 136-residue chain is Large ribosomal subunit protein uL16 (136 aa).

The protein belongs to the universal ribosomal protein uL16 family. In terms of assembly, part of the 50S ribosomal subunit.

Its function is as follows. Binds 23S rRNA and is also seen to make contacts with the A and possibly P site tRNAs. The polypeptide is Large ribosomal subunit protein uL16 (Shewanella loihica (strain ATCC BAA-1088 / PV-4)).